We begin with the raw amino-acid sequence, 404 residues long: Serine/threonine transporter SstT (404 aa).

A run of 8 helical transmembrane segments spans residues 17 to 37, 39 to 59, 75 to 95, 138 to 158, 179 to 199, 212 to 232, 287 to 307, and 313 to 333; these read IGIG…LTGF, ILGK…VFAL, MTLI…VAVL, ALAT…GLAL, IVVW…FTTI, FLIL…NPLI, IPLG…VLTL, and FGIP…AVSA.

Belongs to the dicarboxylate/amino acid:cation symporter (DAACS) (TC 2.A.23) family.

It is found in the cell membrane. It carries out the reaction L-serine(in) + Na(+)(in) = L-serine(out) + Na(+)(out). It catalyses the reaction L-threonine(in) + Na(+)(in) = L-threonine(out) + Na(+)(out). In terms of biological role, involved in the import of serine and threonine into the cell, with the concomitant import of sodium (symport system). The polypeptide is Serine/threonine transporter SstT (Streptococcus pyogenes serotype M5 (strain Manfredo)).